A 144-amino-acid chain; its full sequence is Large ribosomal subunit protein uL15 (144 aa).

The interval 1-49 (MRLNTLSPAAGSKSAPKRVGRGIGSGLGKTAGRGHKGQKSRSGGGVRVG) is disordered. The span at 21 to 31 (RGIGSGLGKTA) shows a compositional bias: gly residues.

The protein belongs to the universal ribosomal protein uL15 family. Part of the 50S ribosomal subunit.

Functionally, binds to the 23S rRNA. The chain is Large ribosomal subunit protein uL15 from Shewanella frigidimarina (strain NCIMB 400).